The chain runs to 507 residues: Probable cytosol aminopeptidase (507 aa).

The Mn(2+) site is built by Lys-275 and Asp-280. Lys-287 is a catalytic residue. Residues Asp-298, Asp-357, and Glu-359 each coordinate Mn(2+). Residue Arg-361 is part of the active site.

This sequence belongs to the peptidase M17 family. Mn(2+) is required as a cofactor.

It is found in the cytoplasm. It catalyses the reaction Release of an N-terminal amino acid, Xaa-|-Yaa-, in which Xaa is preferably Leu, but may be other amino acids including Pro although not Arg or Lys, and Yaa may be Pro. Amino acid amides and methyl esters are also readily hydrolyzed, but rates on arylamides are exceedingly low.. The catalysed reaction is Release of an N-terminal amino acid, preferentially leucine, but not glutamic or aspartic acids.. Functionally, presumably involved in the processing and regular turnover of intracellular proteins. Catalyzes the removal of unsubstituted N-terminal amino acids from various peptides. The polypeptide is Probable cytosol aminopeptidase (Acidobacterium capsulatum (strain ATCC 51196 / DSM 11244 / BCRC 80197 / JCM 7670 / NBRC 15755 / NCIMB 13165 / 161)).